A 213-amino-acid polypeptide reads, in one-letter code: tRNA (guanine-N(7)-)-methyltransferase (213 aa).

Residues Glu-38, Glu-63, Asp-91, and Asp-113 each contribute to the S-adenosyl-L-methionine site. Asp-113 is an active-site residue. Residues Lys-117, Asp-149, and 192 to 195 (TEYE) each bind substrate.

Belongs to the class I-like SAM-binding methyltransferase superfamily. TrmB family.

The catalysed reaction is guanosine(46) in tRNA + S-adenosyl-L-methionine = N(7)-methylguanosine(46) in tRNA + S-adenosyl-L-homocysteine. The protein operates within tRNA modification; N(7)-methylguanine-tRNA biosynthesis. In terms of biological role, catalyzes the formation of N(7)-methylguanine at position 46 (m7G46) in tRNA. The protein is tRNA (guanine-N(7)-)-methyltransferase of Mycoplasmoides gallisepticum (strain R(low / passage 15 / clone 2)) (Mycoplasma gallisepticum).